The primary structure comprises 251 residues: MTARTGWPPRMVMRKAGGLRTLEAALIRGGLGPVAGVDEAGRGPCAGPLVVAACLLAPKAYDRLAGLDDSKKLTEAAREELYPVITRLALAWEVVVIPAWEIDAIGIHVANIEGMRRAVAGLRQRPGYVLTDGFRVPGLAAPSLPVIGGDAAAACIAAASILAKVTRDRIMVELDSRHPGYGFAAHKGYNTPEHTAALQRLGPCSEHRRSWRNVRERLGLRPLDPTVEYAETVLADGVADSRVAADAAHAG.

In terms of domain architecture, RNase H type-2 spans 32-223 (GPVAGVDEAG…VRERLGLRPL (192 aa)). A divalent metal cation contacts are provided by Asp38, Glu39, and Asp132.

This sequence belongs to the RNase HII family. Mn(2+) serves as cofactor. Mg(2+) is required as a cofactor.

Its subcellular location is the cytoplasm. It carries out the reaction Endonucleolytic cleavage to 5'-phosphomonoester.. In terms of biological role, endonuclease that specifically degrades the RNA of RNA-DNA hybrids. The protein is Ribonuclease HII of Nocardia farcinica (strain IFM 10152).